The chain runs to 138 residues: Small ribosomal subunit protein uS12 (138 aa).

The interval 33-55 is disordered; that stretch reads KEHTNVSSPQKRGVCTRVGTMTP. A 3-methylthioaspartic acid modification is found at D102.

Belongs to the universal ribosomal protein uS12 family. In terms of assembly, part of the 30S ribosomal subunit. Contacts proteins S8 and S17. May interact with IF1 in the 30S initiation complex.

With S4 and S5 plays an important role in translational accuracy. Its function is as follows. Interacts with and stabilizes bases of the 16S rRNA that are involved in tRNA selection in the A site and with the mRNA backbone. Located at the interface of the 30S and 50S subunits, it traverses the body of the 30S subunit contacting proteins on the other side and probably holding the rRNA structure together. The combined cluster of proteins S8, S12 and S17 appears to hold together the shoulder and platform of the 30S subunit. The polypeptide is Small ribosomal subunit protein uS12 (Bacillus velezensis (strain DSM 23117 / BGSC 10A6 / LMG 26770 / FZB42) (Bacillus amyloliquefaciens subsp. plantarum)).